The primary structure comprises 156 residues: Arginine repressor (156 aa).

This sequence belongs to the ArgR family.

The protein localises to the cytoplasm. It functions in the pathway amino-acid biosynthesis; L-arginine biosynthesis [regulation]. In terms of biological role, regulates arginine biosynthesis genes. This is Arginine repressor from Shewanella frigidimarina (strain NCIMB 400).